We begin with the raw amino-acid sequence, 153 residues long: Ribosome maturation factor RimP (153 aa).

Belongs to the RimP family.

It is found in the cytoplasm. In terms of biological role, required for maturation of 30S ribosomal subunits. In Clostridium botulinum (strain Alaska E43 / Type E3), this protein is Ribosome maturation factor RimP.